Consider the following 321-residue polypeptide: Methionine import ATP-binding protein MetN (321 aa).

The 240-residue stretch at I2–F241 folds into the ABC transporter domain. G38 to S45 is an ATP binding site.

Belongs to the ABC transporter superfamily. Methionine importer (TC 3.A.1.24) family. The complex is composed of two ATP-binding proteins (MetN), two transmembrane proteins (MetI) and a solute-binding protein (MetQ).

It localises to the cell membrane. The catalysed reaction is L-methionine(out) + ATP + H2O = L-methionine(in) + ADP + phosphate + H(+). It carries out the reaction D-methionine(out) + ATP + H2O = D-methionine(in) + ADP + phosphate + H(+). In terms of biological role, part of the ABC transporter complex MetNIQ involved in methionine import. Responsible for energy coupling to the transport system. The polypeptide is Methionine import ATP-binding protein MetN (Thermobifida fusca (strain YX)).